Here is a 76-residue protein sequence, read N- to C-terminus: Cytochrome c oxidase subunit 6C-1 (76 aa).

The Mitochondrial matrix segment spans residues 2–10; that stretch reads SLAKPAMRG. Residues 11 to 51 traverse the membrane as a helical segment; sequence LLGKRLRFHLPIAFTLSLVAALGFKYGVTEPRKQAYADFYK. The Mitochondrial intermembrane segment spans residues 52–76; the sequence is QYDAVKDFNAMREAGIFESVRPSGE.

This sequence belongs to the cytochrome c oxidase subunit 6c family. Component of the cytochrome c oxidase (complex IV, CIV), a multisubunit enzyme composed of 14 subunits. The complex is composed of a catalytic core of 3 subunits MT-CO1, MT-CO2 and MT-CO3, encoded in the mitochondrial DNA, and 11 supernumerary subunits COX4I, COX5A, COX5B, COX6A, COX6B, COX6C, COX7A, COX7B, COX7C, COX8 and NDUFA4, which are encoded in the nuclear genome. The complex exists as a monomer or a dimer and forms supercomplexes (SCs) in the inner mitochondrial membrane with NADH-ubiquinone oxidoreductase (complex I, CI) and ubiquinol-cytochrome c oxidoreductase (cytochrome b-c1 complex, complex III, CIII), resulting in different assemblies (supercomplex SCI(1)III(2)IV(1) and megacomplex MCI(2)III(2)IV(2)).

The protein resides in the mitochondrion inner membrane. The protein operates within energy metabolism; oxidative phosphorylation. Functionally, component of the cytochrome c oxidase, the last enzyme in the mitochondrial electron transport chain which drives oxidative phosphorylation. The respiratory chain contains 3 multisubunit complexes succinate dehydrogenase (complex II, CII), ubiquinol-cytochrome c oxidoreductase (cytochrome b-c1 complex, complex III, CIII) and cytochrome c oxidase (complex IV, CIV), that cooperate to transfer electrons derived from NADH and succinate to molecular oxygen, creating an electrochemical gradient over the inner membrane that drives transmembrane transport and the ATP synthase. Cytochrome c oxidase is the component of the respiratory chain that catalyzes the reduction of oxygen to water. Electrons originating from reduced cytochrome c in the intermembrane space (IMS) are transferred via the dinuclear copper A center (CU(A)) of subunit 2 and heme A of subunit 1 to the active site in subunit 1, a binuclear center (BNC) formed by heme A3 and copper B (CU(B)). The BNC reduces molecular oxygen to 2 water molecules using 4 electrons from cytochrome c in the IMS and 4 protons from the mitochondrial matrix. This is Cytochrome c oxidase subunit 6C-1 from Thunnus obesus (Bigeye tuna).